A 414-amino-acid polypeptide reads, in one-letter code: uncharacterized protein (414 aa).

This sequence belongs to the MG032/MG096/MG288 family.

This is an uncharacterized protein from Mycoplasma genitalium (strain ATCC 33530 / DSM 19775 / NCTC 10195 / G37) (Mycoplasmoides genitalium).